Here is a 128-residue protein sequence, read N- to C-terminus: KHDC1-like protein (128 aa).

It belongs to the KHDC1 family.

The sequence is that of KHDC1-like protein (KHDC1L) from Homo sapiens (Human).